The following is a 422-amino-acid chain: 5-hydroxytryptamine receptor 1A (422 aa).

Residues 1–23 (MDVLSPGQGNNTTSPPAPFETGG) are disordered. The Extracellular portion of the chain corresponds to 1–38 (MDVLSPGQGNNTTSPPAPFETGGNTTGISDVTFSYQVI). N-linked (GlcNAc...) asparagine glycosylation is found at N10, N11, and N24. The helical transmembrane segment at 39 to 59 (TSLLLGTLIFCAVLGNACVVA) threads the bilayer. The Cytoplasmic portion of the chain corresponds to 60–73 (AIALERSLQNVANY). A helical membrane pass occupies residues 74 to 98 (LIGSLAVTDLMVSVLVLPMAALYQV). Residues 99-107 (LNKWTLGQV) lie on the Extracellular side of the membrane. The chain crosses the membrane as a helical span at residues 108-132 (TCDLFIALDVLCCTSSILHLCAIAL). C109 and C187 are disulfide-bonded. Serotonin is bound by residues D116 and C120. A DRY motif; important for ligand-induced conformation changes motif is present at residues 133–135 (DRY). Residues 133 to 152 (DRYWAITDPIDYVNKRTPRR) lie on the Cytoplasmic side of the membrane. A helical membrane pass occupies residues 153 to 174 (AAALISLTWLIGFLISIPPMLG). Over 175–193 (WRTPEDRSDPDACTISKDH) the chain is Extracellular. Residues 194–216 (GYTIYSTFGAFYIPLLLMLVLYG) traverse the membrane as a helical segment. Residues 217 to 346 (RIFRAARFRI…LARERKTVKT (130 aa)) are Cytoplasmic-facing. The tract at residues 235–263 (KTGADTHHGASPAPQPKKSVNGESGSRNW) is disordered. The 1D-myo-inositol 4-phosphate site is built by T314, K345, T346, and G352. A helical transmembrane segment spans residues 347-370 (LGIIMGTFILCWLPFFIVALVLPF). At 371 to 378 (CESSCHMP) the chain is on the extracellular side. The helical transmembrane segment at 379–403 (TLLGAIINWLGYSNSLLNPVIYAYF) threads the bilayer. Residues 396-400 (NPVIY) carry the NPxxY motif; important for ligand-induced conformation changes and signaling motif. 1D-myo-inositol 4-phosphate is bound by residues F403, N404, and K405. At 404-422 (NKDFQNAFKKIIKCKFCRQ) the chain is on the cytoplasmic side.

Belongs to the G-protein coupled receptor 1 family. 5-hydroxytryptamine receptor subfamily. HTR1A sub-subfamily. As to quaternary structure, heterodimer; heterodimerizes with GPER1. Interacts with YIF1B. Interacts with GPR39 and GALR1.

It is found in the cell membrane. The protein resides in the cell projection. Its subcellular location is the dendrite. G-protein coupled receptor activity is regulated by lipids: phosphatidylinositol 4-phosphate increases HTR1A-mediated activity. G-protein coupled receptor for 5-hydroxytryptamine (serotonin). Also functions as a receptor for various drugs and psychoactive substances. Ligand binding causes a conformation change that triggers signaling via guanine nucleotide-binding proteins (G proteins) and modulates the activity of downstream effectors, such as adenylate cyclase. HTR1A is coupled to G(i)/G(o) G alpha proteins and mediates inhibitory neurotransmission: signaling inhibits adenylate cyclase activity and activates a phosphatidylinositol-calcium second messenger system that regulates the release of Ca(2+) ions from intracellular stores. Beta-arrestin family members regulate signaling by mediating both receptor desensitization and resensitization processes. This Pongo pygmaeus (Bornean orangutan) protein is 5-hydroxytryptamine receptor 1A (HTR1A).